The primary structure comprises 104 residues: Protamine-3 (104 aa).

The tract at residues 1-104 (MGSRCAKLST…PSPEPKQKHS (104 aa)) is disordered. Residues 45–70 (EGEEEEEDEEDEEEEDDDEEDEEEEQ) show a composition bias toward acidic residues. A Phosphoserine modification is found at Ser96.

Belongs to the protamine P3 family. Testis.

It localises to the nucleus. Its subcellular location is the chromosome. Its function is as follows. Protamines substitute for histones in the chromatin of sperm during the haploid phase of spermatogenesis. They compact sperm DNA into a highly condensed, stable and inactive complex. This Rattus norvegicus (Rat) protein is Protamine-3 (Prm3).